The sequence spans 303 residues: Probable 5-dehydro-4-deoxyglucarate dehydratase (303 aa).

The protein belongs to the DapA family.

It carries out the reaction 5-dehydro-4-deoxy-D-glucarate + H(+) = 2,5-dioxopentanoate + CO2 + H2O. It functions in the pathway carbohydrate acid metabolism; D-glucarate degradation; 2,5-dioxopentanoate from D-glucarate: step 2/2. In Azotobacter vinelandii (strain DJ / ATCC BAA-1303), this protein is Probable 5-dehydro-4-deoxyglucarate dehydratase.